Consider the following 327-residue polypeptide: Pectate lyase A (327 aa).

Residues 1 to 19 form the signal peptide; sequence MQNLKFLIAAVSCLGPALA. A glycan (N-linked (GlcNAc...) asparagine) is linked at N99. Positions 140, 169, and 173 each coordinate Ca(2+). Residue R226 is part of the active site.

The protein belongs to the polysaccharide lyase 1 family. Ca(2+) serves as cofactor.

Its subcellular location is the secreted. The enzyme catalyses Eliminative cleavage of (1-&gt;4)-alpha-D-galacturonan to give oligosaccharides with 4-deoxy-alpha-D-galact-4-enuronosyl groups at their non-reducing ends.. Functionally, pectinolytic enzyme consist of four classes of enzymes: pectin lyase, polygalacturonase, pectin methylesterase and rhamnogalacturonase. Among pectinolytic enzymes, pectin lyase is the most important in depolymerization of pectin, since it cleaves internal glycosidic bonds of highly methylated pectins. Favors pectate, the anion, over pectin, the methyl ester. This is Pectate lyase A (plyA) from Emericella nidulans (strain FGSC A4 / ATCC 38163 / CBS 112.46 / NRRL 194 / M139) (Aspergillus nidulans).